We begin with the raw amino-acid sequence, 162 residues long: Selenoprotein F (162 aa).

The first 28 residues, 1 to 28 (MAAGQGGWLRPALGLRLLLATAFQAVSA), serve as a signal peptide directing secretion. Residue selenocysteine 93 is a non-standard amino acid, selenocysteine.

The protein belongs to the selenoprotein M/F family. In terms of assembly, forms a tight complex with UGGT1/UGCGL1. Interacts with UGGT2/UGCGL2. Interacts with RDH11.

It is found in the endoplasmic reticulum lumen. Functionally, may be involved in redox reactions associated with the formation of disulfide bonds. May contribute to the quality control of protein folding in the endoplasmic reticulum. May regulate protein folding by enhancing the catalytic activity of UGGT1/UGCGL1 and UGGT2/UGCGL2. The chain is Selenoprotein F from Mus musculus (Mouse).